We begin with the raw amino-acid sequence, 318 residues long: ATP phosphoribosyltransferase regulatory subunit (318 aa).

Belongs to the class-II aminoacyl-tRNA synthetase family. HisZ subfamily. Heteromultimer composed of HisG and HisZ subunits.

It localises to the cytoplasm. The protein operates within amino-acid biosynthesis; L-histidine biosynthesis; L-histidine from 5-phospho-alpha-D-ribose 1-diphosphate: step 1/9. Required for the first step of histidine biosynthesis. May allow the feedback regulation of ATP phosphoribosyltransferase activity by histidine. The polypeptide is ATP phosphoribosyltransferase regulatory subunit (Lactococcus lactis subsp. cremoris (strain SK11)).